The following is a 128-amino-acid chain: uncharacterized protein (128 aa).

This sequence to M.jannaschii MJ0766.

This is an uncharacterized protein from Methanocaldococcus jannaschii (strain ATCC 43067 / DSM 2661 / JAL-1 / JCM 10045 / NBRC 100440) (Methanococcus jannaschii).